Consider the following 164-residue polypeptide: HTH-type transcriptional regulator IscR (164 aa).

The HTH rrf2-type domain maps to 2 to 131 (RLTSKGRYAV…SSISLEELVN (130 aa)). A DNA-binding region (H-T-H motif) is located at residues 28–51 (LADISERQGISLSYLEQLFSRLRK). [2Fe-2S] cluster contacts are provided by C92, C98, and C104. The tract at residues 141 to 164 (RQDNDKRRAPNGRAQETINVNLRP) is disordered. The segment covering 154–164 (AQETINVNLRP) has biased composition (polar residues).

[2Fe-2S] cluster is required as a cofactor.

In terms of biological role, regulates the transcription of several operons and genes involved in the biogenesis of Fe-S clusters and Fe-S-containing proteins. This chain is HTH-type transcriptional regulator IscR, found in Photorhabdus laumondii subsp. laumondii (strain DSM 15139 / CIP 105565 / TT01) (Photorhabdus luminescens subsp. laumondii).